A 359-amino-acid polypeptide reads, in one-letter code: tRNA/tmRNA (uracil-C(5))-methyltransferase (359 aa).

The S-adenosyl-L-methionine site is built by Q183, Y211, N216, E232, and D292. C317 serves as the catalytic Nucleophile. E351 (proton acceptor) is an active-site residue.

This sequence belongs to the class I-like SAM-binding methyltransferase superfamily. RNA M5U methyltransferase family. TrmA subfamily.

It catalyses the reaction uridine(54) in tRNA + S-adenosyl-L-methionine = 5-methyluridine(54) in tRNA + S-adenosyl-L-homocysteine + H(+). The catalysed reaction is uridine(341) in tmRNA + S-adenosyl-L-methionine = 5-methyluridine(341) in tmRNA + S-adenosyl-L-homocysteine + H(+). Dual-specificity methyltransferase that catalyzes the formation of 5-methyluridine at position 54 (m5U54) in all tRNAs, and that of position 341 (m5U341) in tmRNA (transfer-mRNA). In Pseudomonas fluorescens (strain Pf0-1), this protein is tRNA/tmRNA (uracil-C(5))-methyltransferase.